The primary structure comprises 458 residues: Carboxypeptidase N catalytic chain (458 aa).

The N-terminal stretch at 1–20 (MSDLLSVFLHLLLLFKLVAP) is a signal peptide. A Peptidase M14 domain is found at 24–338 (RHHRYDDLVR…EALIQFLEQV (315 aa)). An intrachain disulfide couples Cys-42 to Cys-104. His-86, Glu-89, and His-216 together coordinate Zn(2+). A disulfide bridge links Cys-271 with Cys-311. The active-site Proton donor/acceptor is the Glu-308. 3 O-linked (GalNAc...) threonine glycosylation sites follow: Thr-400, Thr-402, and Thr-409. Residues 423 to 458 (SPVRRAPSRRHGVRAKVQPQARKKEMEMRQLQRGPA) form a disordered region.

The protein belongs to the peptidase M14 family. In terms of assembly, tetramer of two catalytic chains and two glycosylated inactive chains. Zn(2+) is required as a cofactor. Synthesized in the liver and secreted in plasma.

The protein localises to the secreted. It is found in the extracellular space. It carries out the reaction Release of a C-terminal basic amino acid, preferentially lysine.. Functionally, protects the body from potent vasoactive and inflammatory peptides containing C-terminal Arg or Lys (such as kinins or anaphylatoxins) which are released into the circulation. This chain is Carboxypeptidase N catalytic chain (CPN1), found in Homo sapiens (Human).